A 407-amino-acid chain; its full sequence is Chorismate synthase (407 aa).

Positions 40 and 46 each coordinate NADP(+). FMN-binding positions include 138–140 (RAS) and 259–260 (QA). The segment covering 275–284 (RRGSRAHDEM) has biased composition (basic and acidic residues). The interval 275–308 (RRGSRAHDEMYPGTDGVVRSTNRAGGLEGGMTNG) is disordered. FMN is bound by residues Gly-303, 318–322 (KPIST), and Arg-344.

The protein belongs to the chorismate synthase family. Homotetramer. FMNH2 serves as cofactor.

It carries out the reaction 5-O-(1-carboxyvinyl)-3-phosphoshikimate = chorismate + phosphate. The protein operates within metabolic intermediate biosynthesis; chorismate biosynthesis; chorismate from D-erythrose 4-phosphate and phosphoenolpyruvate: step 7/7. In terms of biological role, catalyzes the anti-1,4-elimination of the C-3 phosphate and the C-6 proR hydrogen from 5-enolpyruvylshikimate-3-phosphate (EPSP) to yield chorismate, which is the branch point compound that serves as the starting substrate for the three terminal pathways of aromatic amino acid biosynthesis. This reaction introduces a second double bond into the aromatic ring system. This Mycobacterium ulcerans (strain Agy99) protein is Chorismate synthase.